Reading from the N-terminus, the 112-residue chain is Cytochrome c3 (112 aa).

Heme c-binding residues include His26, His29, Cys34, Cys37, His38, His39, Cys49, Cys54, His55, His73, Cys83, Cys86, His87, Cys104, Cys109, and His110.

Heme is required as a cofactor.

In terms of biological role, participates in sulfate respiration coupled with phosphorylation by transferring electrons from the enzyme dehydrogenase to ferredoxin. The chain is Cytochrome c3 from Megalodesulfovibrio gigas (strain ATCC 19364 / DSM 1382 / NCIMB 9332 / VKM B-1759) (Desulfovibrio gigas).